Here is a 550-residue protein sequence, read N- to C-terminus: Envelope glycoprotein E (550 aa).

The N-terminal stretch at 1 to 23 is a signal peptide; sequence MELLAASRACIFFGLVTVLDAWG. At 24–408 the chain is on the virion surface side; the sequence is VQQVELSEGA…GAWTRHYLAF (385 aa). N-linked (GlcNAc...) asparagine; by host glycosylation is present at Asn-47. The segment at 65–91 is interaction with gI; the sequence is CAGDISVKKVCVSHSLCEDNIIIGKHC. Asn-109, Asn-122, and Asn-241 each carry an N-linked (GlcNAc...) asparagine; by host glycan. 2 disulfide bridges follow: Cys-247-Cys-273 and Cys-256-Cys-265. Residue Asn-291 is glycosylated (N-linked (GlcNAc...) asparagine; by host). A disulfide bond links Cys-292 and Cys-303. Residues 409–425 form a helical membrane-spanning segment; it reads LLVIICTCAALLVALVV. Residues 426 to 550 lie on the Intravirion side of the membrane; that stretch reads WGCILYIRSN…VASKLKSILK (125 aa). Residues 449-452 carry the Internalization motif motif; that stretch reads YTSV. The tract at residues 468–482 is acidic; that stretch reads ASDSDDSFDSDSDEE. Over residues 471–484 the composition is skewed to acidic residues; sequence SDDSFDSDSDEELE. A disordered region spans residues 471–513; the sequence is SDDSFDSDSDEELEYPPPPKPAPQLPPYQFVDGGDAPSGRSGF. Residues 485 to 496 are compositionally biased toward pro residues; sequence YPPPPKPAPQLP.

The protein belongs to the alphaherpesvirinae glycoprotein E family. In terms of assembly, interacts with gI. Post-translationally, phosphorylated on serines within the acidic cluster. Phosphorylation determines whether endocytosed viral gE traffics to the trans-Golgi network or recycles to the cell membrane.

It localises to the virion membrane. It is found in the host cell membrane. Its subcellular location is the host cell junction. The protein localises to the host Golgi apparatus membrane. The protein resides in the host endosome membrane. In terms of biological role, in epithelial cells, the heterodimer gE/gI is required for the cell-to-cell spread of the virus, by sorting nascent virions to cell junctions. Once the virus reaches the cell junctions, virus particles can spread to adjacent cells extremely rapidly through interactions with cellular receptors that accumulate at these junctions. Implicated in basolateral spread in polarized cells. In neuronal cells, gE/gI is essential for the anterograde spread of the infection throughout the host nervous system. Together with US9, the heterodimer gE/gI is involved in the sorting and transport of viral structural components toward axon tips. This chain is Envelope glycoprotein E (gE), found in Equus caballus (Horse).